Consider the following 199-residue polypeptide: MSNMEKHLFNLKFAAKELNRNAKKCDKEEKAEKAKIKKAIQKGNTEVARIHAENAIRQKNQAINFLRMSARVDAVAARVQTAVTMGKVTKSMAGVVKSMDATLRSMNLEKISALMDKFEHQFETLDVQTQQMEDTMSSTTTLTTPQNQVDMLLQEMADEAGLDLNMELPQGQTGSVGASVASTEQDELSQRLARLRDQV.

The stretch at 15–47 (AKELNRNAKKCDKEEKAEKAKIKKAIQKGNTEV) forms a coiled coil. Residues 132-156 (MEDTMSSTTTLTTPQNQVDMLLQEM) form an interaction with IST1 region. The segment at 167–199 (ELPQGQTGSVGASVASTEQDELSQRLARLRDQV) is disordered. A compositionally biased stretch (polar residues) spans 170 to 183 (QGQTGSVGASVAST). Positions 174–199 (GSVGASVASTEQDELSQRLARLRDQV) are interaction with SPAST. Residues 177–199 (GASVASTEQDELSQRLARLRDQV) are a coiled coil. Residues 180 to 196 (VASTEQDELSQRLARLR) are interaction with VPS4A, MITD1 and STAMBP. The interval 180–199 (VASTEQDELSQRLARLRDQV) is interaction with VTA1. Residues 183–199 (TEQDELSQRLARLRDQV) form an interaction with VPS4B region. Positions 186-196 (DELSQRLARLR) match the MIT-interacting motif motif.

It belongs to the SNF7 family. As to quaternary structure, probable peripherally associated component of the endosomal sorting required for transport complex III (ESCRT-III). ESCRT-III components are thought to multimerize to form a flat lattice on the perimeter membrane of the endosome. Several assembly forms of ESCRT-III may exist that interact and act sequentially. Interacts with CHMP1A. Interacts with VTA1; the interaction probably involves the open conformation of CHMP1B. Interacts with CHMP2A. Interacts with VPS4A; the interaction is direct. Interacts with VPS4B; the interaction is direct. Interacts with SPAST (via MIT domain); the interaction is direct. Interacts with IST1. Interacts with MITD1. Interacts with STAMBP.

Its subcellular location is the cytoplasm. It is found in the cytosol. The protein resides in the endosome. It localises to the late endosome membrane. In terms of biological role, probable peripherally associated component of the endosomal sorting required for transport complex III (ESCRT-III) which is involved in multivesicular bodies (MVBs) formation and sorting of endosomal cargo proteins into MVBs. MVBs contain intraluminal vesicles (ILVs) that are generated by invagination and scission from the limiting membrane of the endosome and mostly are delivered to lysosomes enabling degradation of membrane proteins, such as stimulated growth factor receptors, lysosomal enzymes and lipids. The MVB pathway appears to require the sequential function of ESCRT-O, -I,-II and -III complexes. ESCRT-III proteins mostly dissociate from the invaginating membrane before the ILV is released. The ESCRT machinery also functions in topologically equivalent membrane fission events, such as the terminal stages of cytokinesis. ESCRT-III proteins are believed to mediate the necessary vesicle extrusion and/or membrane fission activities, possibly in conjunction with the AAA ATPase VPS4. Involved in cytokinesis. Involved in recruiting VPS4A and/or VPS4B and SPAST to the midbody of dividing cells. The sequence is that of Charged multivesicular body protein 1B2 from Mus musculus (Mouse).